The primary structure comprises 161 residues: Vasotocin-neurophysin VT (161 aa).

The signal sequence occupies residues 1–22 (MSAMGWTLLAAALLAISAQSNG). A disulfide bridge links Cys23 with Cys28. Gly31 bears the Glycine amide mark. 7 disulfide bridges follow: Cys43–Cys91, Cys46–Cys58, Cys52–Cys81, Cys59–Cys71, Cys99–Cys111, Cys105–Cys123, and Cys112–Cys117.

The protein belongs to the vasopressin/oxytocin family.

It is found in the secreted. Vasotocin is an antidiuretic hormone. This chain is Vasotocin-neurophysin VT, found in Eptatretus stoutii (Pacific hagfish).